Consider the following 82-residue polypeptide: RNA-binding protein Hfq (82 aa).

Positions 11–71 (DTFLNHVRKT…ISTIMPGAPI (61 aa)) constitute a Sm domain.

It belongs to the Hfq family. Homohexamer.

In terms of biological role, RNA chaperone that binds small regulatory RNA (sRNAs) and mRNAs to facilitate mRNA translational regulation in response to envelope stress, environmental stress and changes in metabolite concentrations. Also binds with high specificity to tRNAs. This chain is RNA-binding protein Hfq, found in Nitrobacter winogradskyi (strain ATCC 25391 / DSM 10237 / CIP 104748 / NCIMB 11846 / Nb-255).